The following is a 712-amino-acid chain: Polyribonucleotide nucleotidyltransferase (712 aa).

Positions 487 and 493 each coordinate Mg(2+). The KH domain maps to 554–613 (PRIEVMNIPVDKIREVIGSGGKVIREIVEKTGAKINIEDDGTVKIASSSGKEIEAARKWI). An S1 motif domain is found at 623-691 (GQIYEGTVVK…ERGKVRLSMK (69 aa)).

The protein belongs to the polyribonucleotide nucleotidyltransferase family. Mg(2+) is required as a cofactor.

The protein resides in the cytoplasm. It catalyses the reaction RNA(n+1) + phosphate = RNA(n) + a ribonucleoside 5'-diphosphate. Its function is as follows. Involved in mRNA degradation. Catalyzes the phosphorolysis of single-stranded polyribonucleotides processively in the 3'- to 5'-direction. In Rhizobium etli (strain ATCC 51251 / DSM 11541 / JCM 21823 / NBRC 15573 / CFN 42), this protein is Polyribonucleotide nucleotidyltransferase.